The following is a 110-amino-acid chain: UPF0060 membrane protein MT2717 (110 aa).

A run of 4 helical transmembrane segments spans residues I6 to G26, G32 to L52, V61 to D81, and V90 to H110.

The protein belongs to the UPF0060 family.

Its subcellular location is the cell membrane. The sequence is that of UPF0060 membrane protein MT2717 from Mycobacterium tuberculosis (strain CDC 1551 / Oshkosh).